The following is a 246-amino-acid chain: Uridylate kinase (246 aa).

Residue Lys16–Gly19 coordinates ATP. Gly58 lines the UMP pocket. Positions 59 and 63 each coordinate ATP. UMP contacts are provided by residues Asp78 and Thr139 to Thr146. ATP contacts are provided by Thr166, Tyr172, and Asp175.

It belongs to the UMP kinase family. Homohexamer.

It is found in the cytoplasm. The catalysed reaction is UMP + ATP = UDP + ADP. Its pathway is pyrimidine metabolism; CTP biosynthesis via de novo pathway; UDP from UMP (UMPK route): step 1/1. Its activity is regulated as follows. Inhibited by UTP. Functionally, catalyzes the reversible phosphorylation of UMP to UDP. The protein is Uridylate kinase of Legionella pneumophila (strain Corby).